The chain runs to 66 residues: Large ribosomal subunit protein bL33c (66 aa).

This sequence belongs to the bacterial ribosomal protein bL33 family.

It is found in the plastid. Its subcellular location is the chloroplast. This Physcomitrium patens (Spreading-leaved earth moss) protein is Large ribosomal subunit protein bL33c.